A 424-amino-acid polypeptide reads, in one-letter code: CinA-like protein (424 aa).

The protein belongs to the CinA family.

The protein is CinA-like protein of Shewanella baltica (strain OS195).